The primary structure comprises 647 residues: ATP-dependent zinc metalloprotease FtsH (647 aa).

The tract at residues 1-33 (MARKSDEDTNPMDKFMDRLRGSPGDGGPGRPDP) is disordered. Over 1–39 (MARKSDEDTNPMDKFMDRLRGSPGDGGPGRPDPSQRKVH) the chain is Cytoplasmic. Residues 40–60 (FSIWYFILALLLIVWMQTYMG) traverse the membrane as a helical segment. Residues 61-134 (EQQSEKISYS…RFSGDVQNPW (74 aa)) are Periplasmic-facing. A helical transmembrane segment spans residues 135-155 (LGLITWWLLPFAIMIFFWSFL). The Cytoplasmic portion of the chain corresponds to 156-647 (MRRMGGGPQG…DPVQVEGGAA (492 aa)). 227–234 (GAPGTGKT) is an ATP binding site. His449 contacts Zn(2+). The active site involves Glu450. Zn(2+) is bound by residues His453 and Asp526.

It in the central section; belongs to the AAA ATPase family. In the C-terminal section; belongs to the peptidase M41 family. As to quaternary structure, homohexamer. Zn(2+) is required as a cofactor.

It localises to the cell inner membrane. Functionally, acts as a processive, ATP-dependent zinc metallopeptidase for both cytoplasmic and membrane proteins. Plays a role in the quality control of integral membrane proteins. The sequence is that of ATP-dependent zinc metalloprotease FtsH from Syntrophobacter fumaroxidans (strain DSM 10017 / MPOB).